The following is a 418-amino-acid chain: MNIFEELKARGLVFQTTDEEALVKALTEGQVSYYTGYDPTADSLHLGHLVAILTSRRLQLAGHKPYALVGGATGLIGDPSFKDAERILQTKETVLDWSQKIKEQLSCFLDFDNGENKAELVNNYDWFSQISFIDFLRDVGKHFTINYMMSKDSVKKRIETGISYTEFAYQVMQGYDFYELNAKHNVTLQIGGSDQWGNMTAGTELLRKKADKTGHVMTVPLITDATGKKFGKSEGNAIWLDAKKTSPYEMYQFWLNVMDDDAVRFLKIFTFLSLDEIAAIEEQFNAARHERLAQKTLAREVVTLVHGEAAYQQALNITEQLFAGAIKNLSAAELKQGLSNVPNYQVQAEDSLNIVDMLVTAGISPSKRQAREDLQNGAIYLNGERLQDLDYSLSTADRIDNQLTVIRRGKKKYAVLTY.

Residue tyrosine 34 coordinates L-tyrosine. Positions 39-48 (PTADSLHLGH) match the 'HIGH' region motif. Tyrosine 169 and glutamine 173 together coordinate L-tyrosine. The 'KMSKS' region signature appears at 229-233 (KFGKS). Lysine 232 is a binding site for ATP. An S4 RNA-binding domain is found at 352–418 (LNIVDMLVTA…GKKKYAVLTY (67 aa)).

It belongs to the class-I aminoacyl-tRNA synthetase family. TyrS type 1 subfamily. As to quaternary structure, homodimer.

It is found in the cytoplasm. It catalyses the reaction tRNA(Tyr) + L-tyrosine + ATP = L-tyrosyl-tRNA(Tyr) + AMP + diphosphate + H(+). Its function is as follows. Catalyzes the attachment of tyrosine to tRNA(Tyr) in a two-step reaction: tyrosine is first activated by ATP to form Tyr-AMP and then transferred to the acceptor end of tRNA(Tyr). The chain is Tyrosine--tRNA ligase from Streptococcus equi subsp. equi (strain 4047).